We begin with the raw amino-acid sequence, 157 residues long: Ciliary microtubule inner protein 5 (157 aa).

Disordered regions lie at residues 1 to 57 and 92 to 124; these read MGSR…SALG and DPMG…AVGS. Residues 92-109 show a composition bias toward basic and acidic residues; sequence DPMGNKKEPVKLPDHVPR.

The protein resides in the cell projection. Its subcellular location is the cilium. This chain is Ciliary microtubule inner protein 5 (CIMIP5), found in Bos taurus (Bovine).